A 378-amino-acid chain; its full sequence is Spermidine/putrescine import ATP-binding protein PotA (378 aa).

Residues 18 to 248 (VLLSGISKSF…PKNLFVAGFI (231 aa)) enclose the ABC transporter domain. 50 to 57 (GPSGCGKT) serves as a coordination point for ATP.

The protein belongs to the ABC transporter superfamily. Spermidine/putrescine importer (TC 3.A.1.11.1) family. The complex is composed of two ATP-binding proteins (PotA), two transmembrane proteins (PotB and PotC) and a solute-binding protein (PotD).

It is found in the cell inner membrane. The enzyme catalyses ATP + H2O + polyamine-[polyamine-binding protein]Side 1 = ADP + phosphate + polyamineSide 2 + [polyamine-binding protein]Side 1.. In terms of biological role, part of the ABC transporter complex PotABCD involved in spermidine/putrescine import. Responsible for energy coupling to the transport system. This chain is Spermidine/putrescine import ATP-binding protein PotA, found in Salmonella paratyphi A (strain ATCC 9150 / SARB42).